Consider the following 176-residue polypeptide: Ubiquinol-cytochrome c reductase iron-sulfur subunit (176 aa).

Residues 15-36 form a helical membrane-spanning segment; the sequence is FLFVATGAAAAVGGAAALWPFI. The Rieske domain maps to 87–174; that stretch reads ARAVNVASLP…YQFVSDTKIQ (88 aa). The [2Fe-2S] cluster site is built by Cys119, His121, Cys138, and His141. A disulfide bond links Cys124 and Cys140.

It belongs to the Rieske iron-sulfur protein family. In terms of assembly, the main subunits of complex b-c1 are: cytochrome b, cytochrome c1 and the Rieske protein. It depends on [2Fe-2S] cluster as a cofactor.

Its subcellular location is the cell membrane. The catalysed reaction is a quinol + 2 Fe(III)-[cytochrome c](out) = a quinone + 2 Fe(II)-[cytochrome c](out) + 2 H(+)(out). In terms of biological role, component of the ubiquinol-cytochrome c reductase complex (complex III or cytochrome b-c1 complex), which is a respiratory chain that generates an electrochemical potential coupled to ATP synthesis. This is Ubiquinol-cytochrome c reductase iron-sulfur subunit (petA) from Bradyrhizobium diazoefficiens (strain JCM 10833 / BCRC 13528 / IAM 13628 / NBRC 14792 / USDA 110).